A 526-amino-acid polypeptide reads, in one-letter code: MIRIKKKLILTIIYIHLFILNRLSFENAIKKTKNQENNLTLLPIKSTEEEKDDIKNGKDIKKEIDNDKENIKTNNAKDHSTYIKSYLNTNVNDGLKYLFIPSHNSFIKKYSVFNQINDGMLLNEKNDVKNNEDYKNVDYKNVNFLQYHFKELSNYNIANSIDILQEKEGHLDFVIIPHYTFLDYYKHLSYNSIYHKSSTYGKCIAVDAFIKKINETYDKVKSKCNDIKNDLIATIKKLEHPYDINNKNDDSYRYDISEEIDDKSEETDDETEEVEDSIQDTDSNHTPSNKKKNDLMNRTFKKMMDEYNTKKKKLIKCIKNHENDFNKICMDMKNYGTNLFEQLSCYNNNFCNTNGIRYHYDEYIHKLILSVKSKNLNKDLSDMTNILQQSELLLTNLNKKMGSYIYIDTIKFIHKEMKHIFNRIEYHTKIINDKTKIIQDKIKLNIWRTFQKDELLKRILDMSNEYSLFITSDHLRQMLYNTFYSKEKHLNNIFHHLIYVLQMKFNDVPIKMEYFQTYKKNKPLTQ.

Positions 1 to 24 (MIRIKKKLILTIIYIHLFILNRLS) are cleaved as a signal peptide. A mediates interaction with human BSG region spans residues 33 to 51 (KNQENNLTLLPIKSTEEEK). Asparagine 38 and asparagine 214 each carry an N-linked (GlcNAc...) asparagine glycan. 2 cysteine pairs are disulfide-bonded: cysteine 224/cysteine 317 and cysteine 345/cysteine 351. A compositionally biased stretch (acidic residues) spans 259–279 (EIDDKSEETDDETEEVEDSIQ). Residues 259–294 (EIDDKSEETDDETEEVEDSIQDTDSNHTPSNKKKND) form a disordered region. Asparagine 297 is a glycosylation site (N-linked (GlcNAc...) asparagine).

In terms of assembly, forms a complex composed of RH5, P113 and human BSG/basigin; the complex bridges the merozoite and host erythrocyte membranes. Within the complex, interacts (via C-terminus) with human BSG/basigin isoform 2 (via the extracellular domain); the interaction is independent of BSG glycosylation status. Weakly interacts with P.troglodytes BSG but not with G.gorilla BSG. Also, interacts (via N-terminus) with P113; the interaction tethers RH5 to the merozoite membrane. Component of the PfRH5 adhesion complex composed of 1 copy of CyRPA, RH5 and RIPR; the complex is formed during merozoite invasion of host erythrocytes specifically at the interface between the parasite and host membranes. Within the complex, interacts with CyRPA. CyRPA recruits RIPR to the RH5-P113-BSG complex; the formation of the PfRH5 adhesion complex increases the affinity of RH5 for BSG and probably leads to the release of RH5 from P113 while maintaining the interaction of the PfRH5 adhesion complex with BSG. Cleaved into a 45kDa form during merozoite invasion of host erythrocyte.

The protein localises to the secreted. It localises to the cytoplasmic vesicle. It is found in the secretory vesicle. The protein resides in the rhoptry lumen. Its subcellular location is the host cell membrane. Functionally, essential for the invasion of host erythrocytes by blood stage merozoites. By binding P113 at the surface of the merozoite and human BSG/basigin on the erythrocyte membrane, leads to the establishment of a tight junction between the merozoite and host erythrocyte membranes. In addition, the interaction with BSG results in BSG dimerization which triggers an increase in intracellular Ca(2+) in the erythrocyte. This essential step leads to a rearrangement of the erythrocyte cytoskeleton required for the merozoite invasion. This is Reticulocyte-binding protein homolog 5 from Plasmodium falciparum (isolate 3D7).